Reading from the N-terminus, the 312-residue chain is Ribonuclease Z (312 aa).

7 residues coordinate Zn(2+): His63, His65, Asp67, His68, His141, Asp212, and His270. Catalysis depends on Asp67, which acts as the Proton acceptor.

This sequence belongs to the RNase Z family. In terms of assembly, homodimer. Zn(2+) serves as cofactor.

It carries out the reaction Endonucleolytic cleavage of RNA, removing extra 3' nucleotides from tRNA precursor, generating 3' termini of tRNAs. A 3'-hydroxy group is left at the tRNA terminus and a 5'-phosphoryl group is left at the trailer molecule.. In terms of biological role, zinc phosphodiesterase, which displays some tRNA 3'-processing endonuclease activity. Probably involved in tRNA maturation, by removing a 3'-trailer from precursor tRNA. This chain is Ribonuclease Z, found in Lactobacillus helveticus (strain DPC 4571).